A 557-amino-acid chain; its full sequence is Dihydroxy-acid dehydratase (557 aa).

D78 contacts Mg(2+). C119 serves as a coordination point for [2Fe-2S] cluster. Mg(2+) contacts are provided by D120 and K121. The residue at position 121 (K121) is an N6-carboxylysine. A [2Fe-2S] cluster-binding site is contributed by C192. Residue E443 coordinates Mg(2+). The active-site Proton acceptor is the S469.

It belongs to the IlvD/Edd family. As to quaternary structure, homodimer. Requires [2Fe-2S] cluster as cofactor. Mg(2+) serves as cofactor.

The enzyme catalyses (2R)-2,3-dihydroxy-3-methylbutanoate = 3-methyl-2-oxobutanoate + H2O. The catalysed reaction is (2R,3R)-2,3-dihydroxy-3-methylpentanoate = (S)-3-methyl-2-oxopentanoate + H2O. It functions in the pathway amino-acid biosynthesis; L-isoleucine biosynthesis; L-isoleucine from 2-oxobutanoate: step 3/4. Its pathway is amino-acid biosynthesis; L-valine biosynthesis; L-valine from pyruvate: step 3/4. Its function is as follows. Functions in the biosynthesis of branched-chain amino acids. Catalyzes the dehydration of (2R,3R)-2,3-dihydroxy-3-methylpentanoate (2,3-dihydroxy-3-methylvalerate) into 2-oxo-3-methylpentanoate (2-oxo-3-methylvalerate) and of (2R)-2,3-dihydroxy-3-methylbutanoate (2,3-dihydroxyisovalerate) into 2-oxo-3-methylbutanoate (2-oxoisovalerate), the penultimate precursor to L-isoleucine and L-valine, respectively. In Persephonella marina (strain DSM 14350 / EX-H1), this protein is Dihydroxy-acid dehydratase.